The sequence spans 175 residues: Probable coatomer subunit zeta-A (175 aa).

It belongs to the adaptor complexes small subunit family. Oligomeric complex that consists of at least the alpha, beta, beta', gamma, delta, epsilon and zeta subunits.

It is found in the cytoplasm. The protein resides in the golgi apparatus membrane. The protein localises to the cytoplasmic vesicle. Its subcellular location is the COPI-coated vesicle membrane. Functionally, the coatomer is a cytosolic protein complex that binds to dilysine motifs and reversibly associates with Golgi non-clathrin-coated vesicles, which further mediate biosynthetic protein transport from the ER, via the Golgi up to the trans Golgi network. Coatomer complex is required for budding from Golgi membranes, and is essential for the retrograde Golgi-to-ER transport of dilysine-tagged proteins. The zeta subunit may be involved in regulating the coat assembly and, hence, the rate of biosynthetic protein transport due to its association-dissociation properties with the coatomer complex. The sequence is that of Probable coatomer subunit zeta-A (copZa) from Dictyostelium discoideum (Social amoeba).